We begin with the raw amino-acid sequence, 761 residues long: Neurotrypsin (761 aa).

The signal sequence occupies residues 1–21 (MALARCVLAVILGALSVVARA). The tract at residues 25 to 87 (SRSPLHRPHP…PPTIPRRCGA (63 aa)) is disordered. Positions 38-48 (RSQHAHYLPSS) are enriched in low complexity. A Kringle domain is found at 85–157 (CGAGESWGNA…GKVDWGYCDC (73 aa)). 17 disulfide bridges follow: Cys-85-Cys-157, Cys-101-Cys-141, Cys-130-Cys-155, Cys-191-Cys-255, Cys-204-Cys-265, Cys-235-Cys-245, Cys-298-Cys-361, Cys-311-Cys-371, Cys-341-Cys-351, Cys-411-Cys-475, Cys-424-Cys-485, Cys-455-Cys-465, Cys-505-Cys-636, Cys-547-Cys-563, Cys-651-Cys-717, Cys-680-Cys-694, and Cys-707-Cys-736. Asn-93 carries N-linked (GlcNAc...) asparagine glycosylation. 3 consecutive SRCR domains span residues 166-267 (IRLV…SCVP), 273-373 (IRLA…TCYP), and 386-487 (IRLV…ICDY). Residues 505 to 516 (CGLRLLHRRQKR) form a zymogen activation region region. The region spanning 517–760 (IIGGNNSLRG…FVPWIKSVTS (244 aa)) is the Peptidase S1 domain. N-linked (GlcNAc...) asparagine glycosylation is present at Asn-521. His-562 functions as the Charge relay system in the catalytic mechanism. N-linked (GlcNAc...) asparagine glycosylation occurs at Asn-569. The Charge relay system role is filled by Asp-612. The active-site Charge relay system is Ser-711.

The protein belongs to the peptidase S1 family. Most abundant in cerebral cortex, hippocampus and amygdala.

The protein resides in the secreted. Its function is as follows. Plays a role in neuronal plasticity and the proteolytic action may subserve structural reorganizations associated with learning and memory operations. The sequence is that of Neurotrypsin (Prss12) from Mus musculus (Mouse).